The sequence spans 516 residues: Thiosulfate sulfurtransferase/rhodanese-like domain-containing protein 2 (516 aa).

A Phosphoserine modification is found at Ser-269. Residues 301–396 (EQSDTILLDC…YLEEFPDGFY (96 aa)) form the Rhodanese domain. The active-site Cysteine persulfide intermediate is Cys-355. The segment at 490-516 (RELLQHVRQPVSPEPGPDAEEDGPVLV) is disordered. The segment covering 506-516 (PDAEEDGPVLV) has biased composition (acidic residues).

This is Thiosulfate sulfurtransferase/rhodanese-like domain-containing protein 2 (TSTD2) from Pongo abelii (Sumatran orangutan).